A 196-amino-acid chain; its full sequence is 3-dehydroquinate dehydratase (196 aa).

3-dehydroquinate is bound by residues 23 to 25 (ELR) and arginine 45. The Proton donor/acceptor role is filled by histidine 98. Lysine 122 (schiff-base intermediate with substrate) is an active-site residue. 3-dehydroquinate is bound by residues arginine 159 and glutamine 182.

The protein belongs to the type-I 3-dehydroquinase family. As to quaternary structure, homodimer.

The enzyme catalyses 3-dehydroquinate = 3-dehydroshikimate + H2O. It participates in metabolic intermediate biosynthesis; chorismate biosynthesis; chorismate from D-erythrose 4-phosphate and phosphoenolpyruvate: step 3/7. In terms of biological role, involved in the third step of the chorismate pathway, which leads to the biosynthesis of aromatic amino acids. Catalyzes the cis-dehydration of 3-dehydroquinate (DHQ) and introduces the first double bond of the aromatic ring to yield 3-dehydroshikimate. The chain is 3-dehydroquinate dehydratase from Archaeoglobus fulgidus (strain ATCC 49558 / DSM 4304 / JCM 9628 / NBRC 100126 / VC-16).